A 416-amino-acid polypeptide reads, in one-letter code: Neurotensin receptor type 2 (416 aa).

Residues 1–32 lie on the Extracellular side of the membrane; it reads METSSPWPPRPSPSAGLSLEARLGVDTRLWAK. Residues 33 to 55 form a helical membrane-spanning segment; sequence VLFTALYSLIFAFGTAGNALSVH. At 56 to 64 the chain is on the cytoplasmic side; sequence VVLKARAGR. The chain crosses the membrane as a helical span at residues 65–87; it reads PGRLRYHVLSLALSALLLLLVSM. The Extracellular segment spans residues 88–109; that stretch reads PMELYNFVWSHYPWVFGDLGCR. The cysteines at positions 108 and 194 are disulfide-linked. Residues 110 to 131 traverse the membrane as a helical segment; it reads GYYFVRELCAYATVLSVASLSA. Residues 132–154 are Cytoplasmic-facing; sequence ERCLAVCQPLRARRLLTPRRTRR. A helical membrane pass occupies residues 155–176; it reads LLSLVWVASLGLALPMAVIMGQ. Topologically, residues 177–216 are extracellular; sequence KHEVESADGEPEPASRVCTVLVSRATLQVFIQVNVLVSFA. The helical transmembrane segment at 217–237 threads the bilayer; sequence LPLALTAFLNGITVNHLMALY. Topologically, residues 238–297 are cytoplasmic; it reads SQVPSASAQVSSIPSRLELLSEEGLLGFITWRKTLSLGVQASLVRHKDASQIRSLQHSAQ. The chain crosses the membrane as a helical span at residues 298-318; sequence VLRAIVAVYVICWLPYHARRL. The Extracellular segment spans residues 319–337; sequence MYCYIPDDGWTNELYDFYH. The chain crosses the membrane as a helical span at residues 338–358; sequence YFYMVTNTLFYVSSAVTPILY. Residues 359-416 are Cytoplasmic-facing; it reads NAVSSSFRKLFLESLGSLCGEQHSLVPLPQEAPESTTSTYSFRLWGSPRNPSLGEIQV. The S-palmitoyl cysteine moiety is linked to residue Cys-377. At Ser-410 the chain carries Phosphoserine.

The protein belongs to the G-protein coupled receptor 1 family. Neurotensin receptor subfamily. NTSR2 sub-subfamily. As to expression, abundant in cortex and hypothalamus, and lower levels seen in the heart and intestine.

It localises to the cell membrane. Receptor for the tridecapeptide neurotensin. It is associated with G proteins that activate a phosphatidylinositol-calcium second messenger system. The sequence is that of Neurotensin receptor type 2 (Ntsr2) from Rattus norvegicus (Rat).